Reading from the N-terminus, the 553-residue chain is Heterochromatin protein 1-binding protein 3 (553 aa).

Residue A2 is modified to N-acetylalanine. Phosphoserine is present on S6. 2 disordered regions span residues 29 to 134 and 140 to 159; these read KLGE…KTIP and SASQLARAQKQTPMASSPRP. A Phosphothreonine modification is found at T51. Over residues 60–71 the composition is skewed to acidic residues; it reads GEEEKPEPDISS. Residue K64 forms a Glycyl lysine isopeptide (Lys-Gly) (interchain with G-Cter in SUMO2) linkage. At T85 the chain carries Phosphothreonine. The segment covering 94 to 127 has biased composition (basic and acidic residues); it reads EQPKGEPENEEKEENKSSEETKKDEKDQSKEKEK. Residue K97 forms a Glycyl lysine isopeptide (Lys-Gly) (interchain with G-Cter in SUMO2) linkage. A compositionally biased stretch (polar residues) spans 140 to 154; the sequence is SASQLARAQKQTPMA. Residues S142, S155, and S156 each carry the phosphoserine modification. The H15 1 domain maps to 157–232; that stretch reads PRPKMDAILT…GASGSFVVVQ (76 aa). At K190 the chain carries N6-acetyllysine. The segment at 230 to 255 is disordered; the sequence is VVQKSRKTPQKSRNRKNRSSAVDPEP. Over residues 233–247 the composition is skewed to basic residues; that stretch reads KSRKTPQKSRNRKNR. 2 positions are modified to phosphoserine: S248 and S249. A PxVxL motif motif is present at residues 255-259; sequence PQVKL. 2 H15 domains span residues 255–330 and 337–413; these read PQVK…QLKK and LGGS…QLCF. K258 participates in a covalent cross-link: Glycyl lysine isopeptide (Lys-Gly) (interchain with G-Cter in SUMO2). The interval 422–553 is disordered; it reads LFPKKEPDDS…TMKKSFRVKK (132 aa). Positions 430-450 are enriched in acidic residues; that stretch reads DSRDEDEDEDESSEEDSEDEE. Phosphoserine occurs at positions 441, 442, and 446. The segment covering 489 to 510 has biased composition (basic residues); it reads GKARPLPKKAPPKAKTPAKKTR. Residues 517–527 are compositionally biased toward low complexity; sequence KKPSGGSSKKP. Residues 543 to 553 show a composition bias toward basic residues; it reads STMKKSFRVKK.

Interacts (via PxVxL motif) with CBX5 (via Trp-174).

Its subcellular location is the nucleus. It localises to the chromosome. Component of heterochromatin that maintains heterochromatin integrity during G1/S progression and regulates the duration of G1 phase to critically influence cell proliferative capacity. Mediates chromatin condensation during hypoxia, leading to increased tumor cell viability, radio-resistance, chemo-resistance and self-renewal. The protein is Heterochromatin protein 1-binding protein 3 (HP1BP3) of Homo sapiens (Human).